The chain runs to 384 residues: Gibberellin 3-beta-dioxygenase 1 (384 aa).

Positions 225 to 327 (TLTSTIHLNM…RISMPYFLGP (103 aa)) constitute a Fe2OG dioxygenase domain. Residues histidine 250, aspartate 252, and histidine 308 each coordinate Fe cation. The 2-oxoglutarate site is built by arginine 318 and serine 320.

The protein belongs to the iron/ascorbate-dependent oxidoreductase family. L-ascorbate is required as a cofactor. Fe(2+) serves as cofactor. Expressed in unopened flowers.

The catalysed reaction is gibberellin A20 + 2-oxoglutarate + O2 = gibberellin A1 + succinate + CO2. It functions in the pathway plant hormone biosynthesis; gibberellin biosynthesis. In terms of biological role, catalyzes the 3-beta-hydroxylation of the inactive gibberellin precursors, leading to the formation of bioactive gibberellins. In vitro, converts the precursors GA20, GA5, GA44 and GA9 to the corresponding 3-beta-hydroxylated bioactive products GA1, GA3, GA38 and GA4, respectively. Involved in the production of bioactive GA for vegetative growth and development. May possess 2,3-desaturase activity, catalyzing the conversion of GA9 to 2,3-dehydro-GA9, and GA20 to GA5 (2,3-dehydro GA20). May possess 2-beta-hydroxylase activity, catalyzing the conversion of GA1 and GA4 to the corresponding 2-beta-hydroxylated products GA8 and GA34, respectively. This chain is Gibberellin 3-beta-dioxygenase 1, found in Oryza sativa subsp. japonica (Rice).